Reading from the N-terminus, the 319-residue chain is Cytochrome c biogenesis protein CcsA (319 aa).

Helical transmembrane passes span 11–31, 34–54, 71–91, 97–117, 142–162, 227–247, 254–274, and 288–308; these read VNFA…SLAF, ISGL…ALAL, LYES…FIES, LIGA…SLAL, IMMI…LFLI, IIGL…VWAN, WSWD…AAYL, and AILA…VNFL.

This sequence belongs to the CcmF/CycK/Ccl1/NrfE/CcsA family. In terms of assembly, may interact with Ccs1.

Its subcellular location is the plastid. It is found in the chloroplast thylakoid membrane. Required during biogenesis of c-type cytochromes (cytochrome c6 and cytochrome f) at the step of heme attachment. This chain is Cytochrome c biogenesis protein CcsA, found in Porphyra purpurea (Red seaweed).